The primary structure comprises 456 residues: Bifunctional protein GlmU (456 aa).

Positions Met1–Arg229 are pyrophosphorylase. UDP-N-acetyl-alpha-D-glucosamine is bound by residues Leu11–Gly14, Lys25, Gln76, Gly81–Thr82, Tyr103–Asp105, Gly140, Glu154, Asn169, and Asn227. Asp105 contributes to the Mg(2+) binding site. Asn227 is a Mg(2+) binding site. The interval Leu230–Ala250 is linker. The tract at residues Gly251 to Lys456 is N-acetyltransferase. Positions 333 and 351 each coordinate UDP-N-acetyl-alpha-D-glucosamine. The active-site Proton acceptor is the His363. Tyr366 and Asn377 together coordinate UDP-N-acetyl-alpha-D-glucosamine. Residues Ala380, Asn386–Tyr387, Ser405, Ala423, and Arg440 each bind acetyl-CoA.

The protein in the N-terminal section; belongs to the N-acetylglucosamine-1-phosphate uridyltransferase family. It in the C-terminal section; belongs to the transferase hexapeptide repeat family. Homotrimer. Mg(2+) serves as cofactor.

It is found in the cytoplasm. It carries out the reaction alpha-D-glucosamine 1-phosphate + acetyl-CoA = N-acetyl-alpha-D-glucosamine 1-phosphate + CoA + H(+). The enzyme catalyses N-acetyl-alpha-D-glucosamine 1-phosphate + UTP + H(+) = UDP-N-acetyl-alpha-D-glucosamine + diphosphate. It functions in the pathway nucleotide-sugar biosynthesis; UDP-N-acetyl-alpha-D-glucosamine biosynthesis; N-acetyl-alpha-D-glucosamine 1-phosphate from alpha-D-glucosamine 6-phosphate (route II): step 2/2. Its pathway is nucleotide-sugar biosynthesis; UDP-N-acetyl-alpha-D-glucosamine biosynthesis; UDP-N-acetyl-alpha-D-glucosamine from N-acetyl-alpha-D-glucosamine 1-phosphate: step 1/1. The protein operates within bacterial outer membrane biogenesis; LPS lipid A biosynthesis. In terms of biological role, catalyzes the last two sequential reactions in the de novo biosynthetic pathway for UDP-N-acetylglucosamine (UDP-GlcNAc). The C-terminal domain catalyzes the transfer of acetyl group from acetyl coenzyme A to glucosamine-1-phosphate (GlcN-1-P) to produce N-acetylglucosamine-1-phosphate (GlcNAc-1-P), which is converted into UDP-GlcNAc by the transfer of uridine 5-monophosphate (from uridine 5-triphosphate), a reaction catalyzed by the N-terminal domain. This is Bifunctional protein GlmU from Escherichia coli O8 (strain IAI1).